The sequence spans 1323 residues: Lysine-specific demethylase 3A (1323 aa).

Disordered stretches follow at residues 255–287 (TRTG…PSMC), 307–337 (ATPS…PQGC), and 385–416 (SEPK…GLPK). S264 is modified (phosphoserine). Polar residues-rich tracts occupy residues 266-283 (ENNG…SEAS) and 307-327 (ATPS…NSPP). The residue at position 325 (S325) is a Phosphoserine. S446 is subject to Phosphoserine. Disordered stretches follow at residues 468-487 (AEKK…LKET) and 495-517 (SCCT…LTDP). Polar residues-rich tracts occupy residues 477–486 (LGSQSQNLKE) and 495–507 (SCCT…TQTP). A C6-type zinc finger spans residues 662–687 (CDVCDTTIFNLHWVCPRCGFGVCVDC). The LXXLL motif signature appears at 885 to 889 (LRNLL). K895 bears the N6-acetyllysine mark. The 224-residue stretch at 1060–1283 (MPSRFDDLMA…HCFWLTQEFR (224 aa)) folds into the JmjC domain. Positions 1122, 1124, and 1251 each coordinate Fe cation.

This sequence belongs to the JHDM2 histone demethylase family. As to quaternary structure, interacts with VRK1. It depends on Fe(2+) as a cofactor. Highly expressed in testis (at protein level). Also expressed at high levels in tissues responsive to sympathetic nerve activity such as brown adipose tissue and skeletal muscle.

The protein resides in the cytoplasm. It is found in the nucleus. The catalysed reaction is N(6),N(6)-dimethyl-L-lysyl(9)-[histone H3] + 2 2-oxoglutarate + 2 O2 = L-lysyl(9)-[histone H3] + 2 formaldehyde + 2 succinate + 2 CO2. Its function is as follows. Histone demethylase that specifically demethylates 'Lys-9' of histone H3, thereby playing a central role in histone code. Preferentially demethylates mono- and dimethylated H3 'Lys-9' residue, with a preference for dimethylated residue, while it has weak or no activity on trimethylated H3 'Lys-9'. Demethylation of Lys residue generates formaldehyde and succinate. Involved in hormone-dependent transcriptional activation, by participating in recruitment to androgen-receptor target genes, resulting in H3 'Lys-9' demethylation and transcriptional activation. Involved in spermatogenesis by regulating expression of target genes such as PRM1 and TNP1 which are required for packaging and condensation of sperm chromatin. Involved in obesity resistance through regulation of metabolic genes such as PPARA and UCP1. The polypeptide is Lysine-specific demethylase 3A (Kdm3a) (Mus musculus (Mouse)).